The primary structure comprises 248 residues: MWLGVITLFPEMFRAVTDFGVTGRAVKNGLLELHTWNPRDFTHDRHSTVDDRPYGGGPGMLMMVQPLRDAIHAAKAAAGDGAKVIYLSPQGRKLDQHGVTELAKSDSLILVCGRYEGVDERIIQTEVDEEWSIGDYVLSGGELPAMTLIDSVARLVPGVLGKQASAEQDSFSEGLLDCPHYTRPEQLDGMDVPAVLLSGDHEKIRLWRLQQSIGRTFLRRPELFENLALTDEQTTLLAQFVNDTDKSA.

S-adenosyl-L-methionine-binding positions include Gly113 and Ile133 to Leu138.

This sequence belongs to the RNA methyltransferase TrmD family. In terms of assembly, homodimer.

It localises to the cytoplasm. It catalyses the reaction guanosine(37) in tRNA + S-adenosyl-L-methionine = N(1)-methylguanosine(37) in tRNA + S-adenosyl-L-homocysteine + H(+). In terms of biological role, specifically methylates guanosine-37 in various tRNAs. In Shewanella denitrificans (strain OS217 / ATCC BAA-1090 / DSM 15013), this protein is tRNA (guanine-N(1)-)-methyltransferase.